Here is a 92-residue protein sequence, read N- to C-terminus: Serine protease inhibitor I/II (92 aa).

Positions 1-19 (MKLALALCAAFLLVVLVQA) are cleaved as a signal peptide. 2 Pacifastin domains span residues 20-54 (EQECTPGQTKKQDCNTCNCTPTGVWACTRKGCPPH) and 57-92 (EVTCEPGTTFKDKCNTCRCGSDGKSAACTLKACPQK). 6 cysteine pairs are disulfide-bonded: Cys23–Cys38, Cys33–Cys51, Cys36–Cys46, Cys60–Cys75, Cys70–Cys89, and Cys73–Cys84.

This sequence belongs to the protease inhibitor I19 family. Expressed in hemolymph, ovaries, testes and fat body of adults but are absent in the gut. Also present in larval hemolymph and fat body.

The protein resides in the secreted. Functionally, in vitro, is active against alpha-chymotrypsin and trypsin. Its function is as follows. In vitro, is active against alpha-chymotrypsin and pancreatic elastase. In Schistocerca gregaria (Desert locust), this protein is Serine protease inhibitor I/II.